We begin with the raw amino-acid sequence, 177 residues long: Protein BROTHER of FT and TFL 1 (177 aa).

Belongs to the phosphatidylethanolamine-binding protein family.

It localises to the cytoplasm. Functionally, may form complexes with phosphorylated ligands by interfering with kinases and their effectors. The chain is Protein BROTHER of FT and TFL 1 (BFT) from Arabidopsis thaliana (Mouse-ear cress).